Here is a 158-residue protein sequence, read N- to C-terminus: MEVSNSCSSFSSSSVDSTKPSPSESSVNLSLSLTFPSTSPQREARQDWPPIKSRLRDTLKGRRLLRRGDDTSLFVKVYMEGVPIGRKLDLCVFSGYESLLENLSHMFDTSIICGNRDRKHHVLTYEDKDGDWMMVGDIPWDMFLETVRRLKITRPERY.

The segment covering 1-40 has biased composition (low complexity); it reads MEVSNSCSSFSSSSVDSTKPSPSESSVNLSLSLTFPSTSP. Residues 1-49 form a disordered region; it reads MEVSNSCSSFSSSSVDSTKPSPSESSVNLSLSLTFPSTSPQREARQDWP. The EAR-like (transcriptional repression) motif lies at 29 to 33; it reads LSLSL. The PB1 domain occupies 72–157; the sequence is SLFVKVYMEG…RRLKITRPER (86 aa).

This sequence belongs to the Aux/IAA family. Homodimers and heterodimers.

The protein localises to the nucleus. Functionally, aux/IAA proteins are short-lived transcriptional factors that function as repressors of early auxin response genes at low auxin concentrations. Repression is thought to result from the interaction with auxin response factors (ARFs), proteins that bind to the auxin-responsive promoter element (AuxRE). Formation of heterodimers with ARF proteins may alter their ability to modulate early auxin response genes expression. The polypeptide is Auxin-responsive protein IAA31 (IAA31) (Arabidopsis thaliana (Mouse-ear cress)).